We begin with the raw amino-acid sequence, 413 residues long: Peptidase T (413 aa).

H84 contributes to the Zn(2+) binding site. Residue D86 is part of the active site. Residue D146 coordinates Zn(2+). The Proton acceptor role is filled by E180. Positions 181, 203, and 385 each coordinate Zn(2+).

It belongs to the peptidase M20B family. Zn(2+) serves as cofactor.

It localises to the cytoplasm. The enzyme catalyses Release of the N-terminal residue from a tripeptide.. Functionally, cleaves the N-terminal amino acid of tripeptides. The chain is Peptidase T from Limosilactobacillus fermentum (strain NBRC 3956 / LMG 18251) (Lactobacillus fermentum).